The sequence spans 309 residues: uncharacterized protein (309 aa).

The segment covering 1–11 (MPGNSRRRGAV) has biased composition (basic residues). A disordered region spans residues 1-69 (MPGNSRRRGA…PVKRTDETET (69 aa)). Residues Gly-261, Ile-281, and Leu-290 each coordinate S-adenosyl-L-methionine.

Belongs to the class IV-like SAM-binding methyltransferase superfamily. RNA methyltransferase TrmH family.

This is an uncharacterized protein from Mycobacterium leprae (strain TN).